A 208-amino-acid chain; its full sequence is Proheparin-binding EGF-like growth factor (208 aa).

Residues 1–23 form the signal peptide; it reads MKLLPSVVLKLFLAAVLSALVTG. Residues 24–62 constitute a propeptide that is removed on maturation; that stretch reads ESLERLRRGLAAATSNPDPPTGTTNQLLPTGADRAQEVQ. Residues 24–160 lie on the Extracellular side of the membrane; sequence ESLERLRRGL…ENPLYTYDHT (137 aa). The interval 82–103 is disordered; sequence ALATPGKEKNGKKKRKGKGLGK. O-linked (GalNAc...) threonine glycosylation occurs at T85. Residues 91–102 show a composition bias toward basic residues; sequence NGKKKRKGKGLG. One can recognise an EGF-like domain in the interval 104-144; it reads KRDPCLKKYKDYCIHGECRYLKELRIPSCHCLPGYHGQRCH. 3 cysteine pairs are disulfide-bonded: C108–C121, C116–C132, and C134–C143. The propeptide at 149-208 is C-terminal; sequence PVENPLYTYDHTTVLAVVAVVLSSVCLLVIVGLLMFRYHRRGGYDLESEEKVKLGMASSH. Residues 161–184 traverse the membrane as a helical segment; that stretch reads TVLAVVAVVLSSVCLLVIVGLLMF. Residues 185 to 208 lie on the Cytoplasmic side of the membrane; it reads RYHRRGGYDLESEEKVKLGMASSH.

Interacts with FBLN1. Interacts with EGFR and ERBB4. O-glycosylated. In terms of tissue distribution, most abundant in skeletal muscle, lung, spleen brain and heart.

It is found in the secreted. Its subcellular location is the extracellular space. The protein localises to the cell membrane. Growth factor that mediates its effects via EGFR, ERBB2 and ERBB4. Required for normal cardiac valve formation and normal heart function. Promotes smooth muscle cell proliferation. May be involved in macrophage-mediated cellular proliferation. It is mitogenic for fibroblasts, but not endothelial cells. It is able to bind EGF receptor/EGFR with higher affinity than EGF itself and is a far more potent mitogen for smooth muscle cells than EGF. Also acts as a diphtheria toxin receptor. The polypeptide is Proheparin-binding EGF-like growth factor (Hbegf) (Rattus norvegicus (Rat)).